A 123-amino-acid chain; its full sequence is MDERRTLRVSEAVREELSEIISFEMDDPRVLEAEVTEVMVSPDSRHASIKIACRGDEKKQNHAIAALEHAAGYLRRELASRLQLRHVPELHFERDKNPDVESRVDFLLRRARRTKGREENPSS.

This sequence belongs to the RbfA family. In terms of assembly, monomer. Binds 30S ribosomal subunits, but not 50S ribosomal subunits or 70S ribosomes.

It localises to the cytoplasm. Functionally, one of several proteins that assist in the late maturation steps of the functional core of the 30S ribosomal subunit. Associates with free 30S ribosomal subunits (but not with 30S subunits that are part of 70S ribosomes or polysomes). Required for efficient processing of 16S rRNA. May interact with the 5'-terminal helix region of 16S rRNA. In Solibacter usitatus (strain Ellin6076), this protein is Ribosome-binding factor A.